The chain runs to 85 residues: Large ribosomal subunit protein bL27 (85 aa).

Positions 1 to 22 (MAHKKAGGSTRNGRDSESKRLG) are disordered.

Belongs to the bacterial ribosomal protein bL27 family.

The polypeptide is Large ribosomal subunit protein bL27 (Aliivibrio fischeri (strain ATCC 700601 / ES114) (Vibrio fischeri)).